A 785-amino-acid polypeptide reads, in one-letter code: Hypha-specific G1 cyclin-related protein 1 (785 aa).

Residues 1 to 42 (MINITKPLTPKSISQQKQQQQHPYKNISTTKSNNNPQASGSK) form a disordered region. Residues 22-42 (HPYKNISTTKSNNNPQASGSK) are compositionally biased toward polar residues. Residues 71–238 (DIYDIMVNLI…VLNTLEWSLN (168 aa)) enclose the Cyclin N-terminal domain. Disordered regions lie at residues 408 to 433 (TTTTTTTTSDNISTTPTSSTGSTTPV), 447 to 679 (VSST…SKFN), and 750 to 774 (NNSGNGKGNGNGGSGTPISENDSPI). 2 stretches are compositionally biased toward low complexity: residues 447-473 (VSSTSSVASSSNANTPSSSCSTTSTTP) and 484-512 (NYSNYSNYSNYSNSSTSLGLTNNNNNNTT). The span at 513–535 (ISPVDSTTINSHTKNSSQLNYQY) shows a compositional bias: polar residues. Low complexity predominate over residues 579–613 (NSANKNSNKSNSANNNNTTTIATTTTTTTNNNNNS). Residues 621–631 (LSYNNYFNSPN) are compositionally biased toward polar residues. A compositionally biased stretch (low complexity) spans 646-679 (QQQQQNQGQNQQQPLQLYQGDNNNNGTNTNSKFN). Residues 754-764 (NGKGNGNGGSG) are compositionally biased toward gly residues. Over residues 765–774 (TPISENDSPI) the composition is skewed to polar residues.

The protein belongs to the cyclin family. In terms of assembly, interacts with CDC28.

Functionally, hypha-specific G1 cyclin-related protein involved in regulation of morphogenesis and opaque cells filamentous growth, and required for both conventional and pheromone-stimulated biofilm formation. Required to maintain hyphal tip localization of actin and SPA2. Regulates the CDC28 kinase during hyphal growth. The CDC28-HGC1 complex phosphorylates and prevents RGA2 from localizing to hyphal tips, leading to localized CDC42 activation for hyphal extension. The CDC28-HGC1 complex also phosphorylates SEC2 and maintains CDC11 phosphorylation throughout hyphal growth. Moreover CDC28-HGC1 phosphorylation of EFG1 represses cell separation genes during hyphal growth. Also partially controls SEP7 phosphorylation status and subsequent septin ring dynamics. Required for virulence and especially mediates dynamic adhesion to endothelium of blood vessels during circulation. The polypeptide is Hypha-specific G1 cyclin-related protein 1 (HGC1) (Candida albicans (strain SC5314 / ATCC MYA-2876) (Yeast)).